A 418-amino-acid chain; its full sequence is ORC1-type DNA replication protein 2 (418 aa).

ATP-binding positions include 72 to 76 (TGKTV), Y218, and R230.

It belongs to the CDC6/cdc18 family.

Its function is as follows. Involved in regulation of DNA replication. In Sulfurisphaera tokodaii (strain DSM 16993 / JCM 10545 / NBRC 100140 / 7) (Sulfolobus tokodaii), this protein is ORC1-type DNA replication protein 2 (cdc6-2).